Here is an 880-residue protein sequence, read N- to C-terminus: DNA mismatch repair protein MutS (880 aa).

605–612 (GPNMSGKS) serves as a coordination point for ATP. Residues 790–829 (QETAAVPSRGVEPPAPVIEPTPAKEQTPVKEQTTPLVEES) are disordered. Residues 818–829 (VKEQTTPLVEES) show a composition bias toward polar residues.

This sequence belongs to the DNA mismatch repair MutS family.

Functionally, this protein is involved in the repair of mismatches in DNA. It is possible that it carries out the mismatch recognition step. This protein has a weak ATPase activity. The sequence is that of DNA mismatch repair protein MutS from Limosilactobacillus fermentum (strain NBRC 3956 / LMG 18251) (Lactobacillus fermentum).